Reading from the N-terminus, the 135-residue chain is Putative large ribosomal subunit protein eL32' (135 aa).

The protein belongs to the eukaryotic ribosomal protein eL32 family.

The protein is Putative large ribosomal subunit protein eL32' (Rpl32-ps) of Mus musculus (Mouse).